The following is a 120-amino-acid chain: U13-lycotoxin-Ls1a (120 aa).

The first 16 residues, 1–16 (MKILFVLISILHAVYC), serve as a signal peptide directing secretion. Residues 17–54 (FSSEEDVDSAYLANELEPVEDINSEQYAALEPKEEHER) constitute a propeptide that is removed on maturation. Intrachain disulfides connect Cys56-Cys70, Cys63-Cys76, Cys69-Cys87, and Cys78-Cys85. The Agouti domain maps to 56-95 (CADMGQDCKDDCDCCLNIATCNCWFGRYFCSCTFGDYQTC).

The protein belongs to the neurotoxin 05 (agouti) family. Contains 6 disulfide bonds. As to expression, expressed by the venom gland.

The protein resides in the secreted. In Lycosa singoriensis (Wolf spider), this protein is U13-lycotoxin-Ls1a.